A 156-amino-acid chain; its full sequence is SsrA-binding protein (156 aa).

Belongs to the SmpB family.

The protein localises to the cytoplasm. Its function is as follows. Required for rescue of stalled ribosomes mediated by trans-translation. Binds to transfer-messenger RNA (tmRNA), required for stable association of tmRNA with ribosomes. tmRNA and SmpB together mimic tRNA shape, replacing the anticodon stem-loop with SmpB. tmRNA is encoded by the ssrA gene; the 2 termini fold to resemble tRNA(Ala) and it encodes a 'tag peptide', a short internal open reading frame. During trans-translation Ala-aminoacylated tmRNA acts like a tRNA, entering the A-site of stalled ribosomes, displacing the stalled mRNA. The ribosome then switches to translate the ORF on the tmRNA; the nascent peptide is terminated with the 'tag peptide' encoded by the tmRNA and targeted for degradation. The ribosome is freed to recommence translation, which seems to be the essential function of trans-translation. In Clostridium botulinum (strain Loch Maree / Type A3), this protein is SsrA-binding protein.